Here is a 353-residue protein sequence, read N- to C-terminus: 6-phosphogluconolactonase (353 aa).

It belongs to the cycloisomerase 2 family.

It localises to the cytoplasm. The catalysed reaction is 6-phospho-D-glucono-1,5-lactone + H2O = 6-phospho-D-gluconate + H(+). It functions in the pathway carbohydrate degradation; pentose phosphate pathway; D-ribulose 5-phosphate from D-glucose 6-phosphate (oxidative stage): step 2/3. In terms of biological role, carboxylic ester hydrolase that may be involved in ulvan degradation. Ulvan is the main polysaccharide component of the Ulvales (green seaweed) cell wall. It is composed of disaccharide building blocks comprising 3-sulfated rhamnose (Rha3S) linked to D-glucuronic acid (GlcA), L-iduronic acid (IduA), or D-xylose (Xyl). Catalyzes the hydrolysis of 6-phosphogluconolactone to 6-phosphogluconate. This Formosa agariphila (strain DSM 15362 / KCTC 12365 / LMG 23005 / KMM 3901 / M-2Alg 35-1) protein is 6-phosphogluconolactonase (pgl).